The primary structure comprises 736 residues: Melanotransferrin (736 aa).

The N-terminal stretch at 1-19 (MRCRSAAMWIFLALRTALG) is a signal peptide. 2 Transferrin-like domains span residues 23 to 357 (VRWC…GLLC) and 366 to 706 (LRWC…GMQS). 2 disulfides stabilise this stretch: Cys26-Cys63 and Cys36-Cys54. Asp78 and Tyr107 together coordinate Fe(3+). N-linked (GlcNAc...) asparagine glycosylation occurs at Asn118. 4 disulfide bridges follow: Cys130–Cys216, Cys172–Cys189, Cys186–Cys199, and Cys257–Cys271. Residue Thr132 participates in hydrogencarbonate binding. N-linked (GlcNAc...) asparagine glycosylation is present at Asn135. Hydrogencarbonate is bound by residues Arg136, Val138, and Gly139. Fe(3+) is bound at residue Tyr210. The Fe(3+) site is built by His279 and Tyr451. Asn515 carries N-linked (GlcNAc...) asparagine glycosylation. Residue His625 coordinates Fe(3+). A lipid anchor (GPI-anchor amidated glycine) is attached at Gly711. The propeptide at 712–736 (AAVGAPGASLLPLLPLAVGLLLSSL) is removed in mature form.

This sequence belongs to the transferrin family.

The protein resides in the cell membrane. Functionally, involved in iron cellular uptake. Seems to be internalized and then recycled back to the cell membrane. Binds a single atom of iron per subunit. Could also bind zinc. This is Melanotransferrin from Oryctolagus cuniculus (Rabbit).